The chain runs to 523 residues: Calcium uptake protein 3, mitochondrial (523 aa).

The N-terminal 6 residues, 1–6 (MAALRR), are a transit peptide targeting the mitochondrion. A disordered region spans residues 18–48 (LAPQQPFLSPWGRPAGTAPGMSGRPFSGREE). The EF-hand 1 domain occupies 225–260 (KPHAGFRIAFNMFDTDGNEMVDKKEFLVLQEIFRKK). Ca(2+) is bound by residues D238, D240, N242, M244, D246, and E249. One can recognise an EF-hand 2; degenerate domain in the interval 414–429 (ITFDEFRSFFQFLNNL). Residues 463–498 (LSPHLVNTVFKIFDVDKDDQLSYKEFIGIMKDRLHR) form the EF-hand 3 domain. 5 residues coordinate Ca(2+): D476, D478, D480, Q482, and E487.

The protein belongs to the MICU1 family. MICU3 subfamily. As to quaternary structure, heterodimer; disulfide-linked; heterodimerizes with MICU1. Component of the uniplex complex, composed of MCU, EMRE/SMDT1, MICU1 and MICU3 in a 4:4:1:1 stoichiometry.

Its subcellular location is the mitochondrion intermembrane space. It is found in the mitochondrion inner membrane. In terms of biological role, tissue-specific calcium sensor of the mitochondrial calcium uniporter (MCU) channel, which specifically regulates MCU channel activity in the central nervous system and skeletal muscle. Senses calcium level via its EF-hand domains: compared to MICU1 and MICU2, MICU3 has a higher affinity for calcium. MICU1 and MICU3 form a disulfide-linked heterodimer that stimulates and inhibits MCU activity, depending on the concentration of calcium. At low calcium levels, MICU1 occludes the pore of the MCU channel, preventing mitochondrial calcium uptake. At higher calcium levels, calcium-binding to MICU1 and MICU3 induces a conformational change that weakens MCU-MICU1 interactions and moves the MICU1-MICU3 heterodimer away from the pore, allowing calcium permeation through the MCU channel. The high calcium affinity of MICU3 lowers the calcium threshold necessary for calcium permeation through the MCU channel. The MICU1-MICU3 heterodimer promotes flexibility of neurotransmission in neuronal cells by enhancing mitochondrial calcium uptake in presynapses. It is also required to increase mitochondrial calcium uptake in skeletal muscle cells, thereby increasing ATP production. The polypeptide is Calcium uptake protein 3, mitochondrial (Rattus norvegicus (Rat)).